A 185-amino-acid polypeptide reads, in one-letter code: 3-hydroxyanthranilate 3,4-dioxygenase (185 aa).

Position 44 (Arg44) interacts with O2. Positions 48, 54, and 95 each coordinate Fe cation. Glu54 contributes to the substrate binding site. Arg99 and Glu109 together coordinate substrate. Cys124, Cys127, Cys161, and Cys164 together coordinate a divalent metal cation.

It belongs to the 3-HAO family. Fe(2+) serves as cofactor.

The protein localises to the cytoplasm. The catalysed reaction is 3-hydroxyanthranilate + O2 = (2Z,4Z)-2-amino-3-carboxymuconate 6-semialdehyde. Its pathway is cofactor biosynthesis; NAD(+) biosynthesis; quinolinate from L-kynurenine: step 3/3. Functionally, catalyzes the oxidative ring opening of 3-hydroxyanthranilate to 2-amino-3-carboxymuconate semialdehyde, which spontaneously cyclizes to quinolinate. The sequence is that of 3-hydroxyanthranilate 3,4-dioxygenase from Podospora anserina (strain S / ATCC MYA-4624 / DSM 980 / FGSC 10383) (Pleurage anserina).